A 454-amino-acid polypeptide reads, in one-letter code: tRNA modification GTPase MnmE (454 aa).

R23, E80, and K120 together coordinate (6S)-5-formyl-5,6,7,8-tetrahydrofolate. Positions 216–377 (GMKVVIAGRP…LRNHLKQSMG (162 aa)) constitute a TrmE-type G domain. K(+) is bound at residue N226. Residues 226 to 231 (NAGKSS), 245 to 251 (TDIAGTT), 270 to 273 (DTAG), 335 to 338 (NKAD), and 358 to 360 (SAR) contribute to the GTP site. Position 230 (S230) interacts with Mg(2+). K(+) is bound by residues T245, I247, and T250. T251 provides a ligand contact to Mg(2+). K454 lines the (6S)-5-formyl-5,6,7,8-tetrahydrofolate pocket.

Belongs to the TRAFAC class TrmE-Era-EngA-EngB-Septin-like GTPase superfamily. TrmE GTPase family. As to quaternary structure, homodimer. Heterotetramer of two MnmE and two MnmG subunits. K(+) serves as cofactor.

It is found in the cytoplasm. Its function is as follows. Exhibits a very high intrinsic GTPase hydrolysis rate. Involved in the addition of a carboxymethylaminomethyl (cmnm) group at the wobble position (U34) of certain tRNAs, forming tRNA-cmnm(5)s(2)U34. In Salmonella typhimurium (strain LT2 / SGSC1412 / ATCC 700720), this protein is tRNA modification GTPase MnmE.